A 1288-amino-acid chain; its full sequence is Contactin-associated protein-like 3 (1288 aa).

Residues 1-25 (MASVAWAVLKVLLLLPTQTWSPVGA) form the signal peptide. The Extracellular segment spans residues 26–1245 (GNPPDCDAPL…LVNADRRDSA (1220 aa)). In terms of domain architecture, F5/8 type C spans 31–177 (CDAPLASALP…IGMRIEVYGC (147 aa)). Cys-31 and Cys-177 form a disulfide bridge. Laminin G-like domains are found at residues 183-364 (VVYF…SFSC) and 370-545 (VPVT…IDSC). N-linked (GlcNAc...) asparagine glycans are attached at residues Asn-285, Asn-359, Asn-441, and Asn-497. An intrachain disulfide couples Cys-332 to Cys-364. Intrachain disulfides connect Cys-513–Cys-545, Cys-551–Cys-562, Cys-556–Cys-571, and Cys-573–Cys-583. Positions 551 to 583 (CLPSYCEHGGECSQSWDTFSCDCLGTGYTGETC) constitute an EGF-like 1 domain. Residues 584–792 (HSSLYEQSCE…LLCRGDQSFW (209 aa)) enclose the Fibrinogen C-terminal domain. N-linked (GlcNAc...) asparagine glycosylation is found at Asn-623 and Asn-706. A Laminin G-like 3 domain is found at 793–958 (NSASFNTETS…TVTPGVEPGC (166 aa)). Intrachain disulfides connect Cys-931–Cys-958, Cys-962–Cys-975, Cys-969–Cys-984, and Cys-986–Cys-996. The 35-residue stretch at 962–996 (CSTYGHLCRNGGRCREKRRGVTCDCAFSAYDGPFC) folds into the EGF-like 2 domain. The Laminin G-like 4 domain occupies 1015–1203 (QEHYTLSENS…RGHVAPMARC (189 aa)). N-linked (GlcNAc...) asparagine glycans are attached at residues Asn-1023, Asn-1073, and Asn-1120. Cys-1167 and Cys-1203 are joined by a disulfide. A disordered region spans residues 1215 to 1236 (ELAPRLAGGAGRSGPADEGEPL). The chain crosses the membrane as a helical span at residues 1246–1266 (VIGGVIAVVIFILLCITAIAI). Over 1267–1288 (RIYQQRKLRKENESKVSKKEEC) the chain is Cytoplasmic.

This sequence belongs to the neurexin family.

The protein resides in the cell membrane. It is found in the secreted. In Homo sapiens (Human), this protein is Contactin-associated protein-like 3 (CNTNAP3).